Consider the following 671-residue polypeptide: DNA ligase (671 aa).

Residues 32-36 (DAEYD), 81-82 (SL), and Glu-113 each bind NAD(+). The active-site N6-AMP-lysine intermediate is Lys-115. 4 residues coordinate NAD(+): Arg-136, Glu-173, Lys-290, and Lys-314. Positions 408, 411, 426, and 432 each coordinate Zn(2+). The 79-residue stretch at 593-671 (EIDSPFAGKT…ETEMLRLLGS (79 aa)) folds into the BRCT domain.

The protein belongs to the NAD-dependent DNA ligase family. LigA subfamily. The cofactor is Mg(2+). Mn(2+) is required as a cofactor.

It catalyses the reaction NAD(+) + (deoxyribonucleotide)n-3'-hydroxyl + 5'-phospho-(deoxyribonucleotide)m = (deoxyribonucleotide)n+m + AMP + beta-nicotinamide D-nucleotide.. DNA ligase that catalyzes the formation of phosphodiester linkages between 5'-phosphoryl and 3'-hydroxyl groups in double-stranded DNA using NAD as a coenzyme and as the energy source for the reaction. It is essential for DNA replication and repair of damaged DNA. This chain is DNA ligase, found in Escherichia fergusonii (strain ATCC 35469 / DSM 13698 / CCUG 18766 / IAM 14443 / JCM 21226 / LMG 7866 / NBRC 102419 / NCTC 12128 / CDC 0568-73).